The chain runs to 336 residues: Tetraacyldisaccharide 4'-kinase (336 aa).

60–67 contributes to the ATP binding site; it reads TAGGNGKT.

The protein belongs to the LpxK family.

It carries out the reaction a lipid A disaccharide + ATP = a lipid IVA + ADP + H(+). It participates in glycolipid biosynthesis; lipid IV(A) biosynthesis; lipid IV(A) from (3R)-3-hydroxytetradecanoyl-[acyl-carrier-protein] and UDP-N-acetyl-alpha-D-glucosamine: step 6/6. Functionally, transfers the gamma-phosphate of ATP to the 4'-position of a tetraacyldisaccharide 1-phosphate intermediate (termed DS-1-P) to form tetraacyldisaccharide 1,4'-bis-phosphate (lipid IVA). The polypeptide is Tetraacyldisaccharide 4'-kinase (Vibrio cholerae serotype O1 (strain ATCC 39315 / El Tor Inaba N16961)).